The primary structure comprises 951 residues: Leucine-rich repeat-containing G-protein coupled receptor 4 (951 aa).

The signal sequence occupies residues 1 to 24 (MPGPLRLLCFFALGLLGSAGPSGA). The 33-residue stretch at 25-57 (APPLCAAPCSCDGDRRVDCSGKGLTAVPEGLSA) folds into the LRRNT domain. The Extracellular portion of the chain corresponds to 25–544 (APPLCAAPCS…LLGSWMIRLT (520 aa)). Disulfide bonds link cysteine 29/cysteine 35 and cysteine 33/cysteine 43. LRR repeat units follow at residues 58–79 (FTQA…AFKS), 82–103 (FLEE…ALSG), 106–127 (ELKV…AIHG), 130–151 (ALQS…SFEG), 154–177 (QLRH…SNLP), 178–199 (TLQA…AFTN), 202–223 (SLVV…CFDG), 226–247 (NLET…IKAL), 249–270 (SLKE…AFGG), and 273–294 (LLRT…AFHN). A glycan (N-linked (GlcNAc...) asparagine) is linked at asparagine 68. N-linked (GlcNAc...) asparagine glycosylation is found at asparagine 188 and asparagine 199. Asparagine 294 and asparagine 314 each carry an N-linked (GlcNAc...) asparagine glycan. 5 LRR repeats span residues 320 to 341 (HLES…LCQN), 344 to 365 (MLRT…NGCR), 366 to 387 (ALEE…TFQG), 390 to 411 (SLRI…AFAK), and 414 to 435 (TITN…GLNG). The cysteines at positions 339 and 364 are disulfide-linked. Intrachain disulfides connect cysteine 470-cysteine 522 and cysteine 471-cysteine 476. Asparagine 505 carries N-linked (GlcNAc...) asparagine glycosylation. A helical transmembrane segment spans residues 545–565 (VWFIFLVALLFNLLVILTVFA). Residues 566-575 (SCSSLPASKL) are Cytoplasmic-facing. The helical transmembrane segment at 576–596 (FIGLISVSNLLMGIYTGILTF) threads the bilayer. Topologically, residues 597 to 619 (LDAVSWGRFAEFGIWWETGSGCK) are extracellular. A disulfide bond links cysteine 618 and cysteine 693. A helical transmembrane segment spans residues 620–640 (VAGSLAVFSSESAVFLLTLAA). At 641-661 (VERSVFAKDLMKHGKSSHLRQ) the chain is on the cytoplasmic side. A helical transmembrane segment spans residues 662–682 (FQVAALLALLGAAVAGCFPLF). The Extracellular portion of the chain corresponds to 683-703 (HGGQYSASPLCLPFPTGETPS). The chain crosses the membrane as a helical span at residues 704 to 724 (LGFTVTLVLLNSLAFLLMAII). The Cytoplasmic portion of the chain corresponds to 725 to 756 (YTKLYCNLEKEDLSENSQSSVIKHVAWLIFTN). The helical transmembrane segment at 757-777 (CIFFCPVAFFSFAPLITAISI) threads the bilayer. Residues 778 to 783 (SPEIMK) are Extracellular-facing. A helical transmembrane segment spans residues 784–804 (SVTLIFFPLPACLNPVLYVFF). The Cytoplasmic segment spans residues 805–951 (NPKFKEDWKL…YAYNLQRVRD (147 aa)). Residue serine 920 is modified to Phosphoserine.

It belongs to the G-protein coupled receptor 1 family.

Its subcellular location is the cell membrane. Its function is as follows. Receptor for R-spondins that potentiates the canonical Wnt signaling pathway and is involved in the formation of various organs. Upon binding to R-spondins (RSPO1, RSPO2, RSPO3 or RSPO4), associates with phosphorylated LRP6 and frizzled receptors that are activated by extracellular Wnt receptors, triggering the canonical Wnt signaling pathway to increase expression of target genes. In contrast to classical G-protein coupled receptors, does not activate heterotrimeric G-proteins to transduce the signal. Its function as activator of the Wnt signaling pathway is required for the development of various organs, including liver, kidney, intestine, bone, reproductive tract and eye. May also act as a receptor for norrin (NDP), such results however require additional confirmation in vivo. Required during spermatogenesis to activate the Wnt signaling pathway in peritubular myoid cells. Required for the maintenance of intestinal stem cells and Paneth cell differentiation in postnatal intestinal crypts. Acts as a regulator of bone formation and remodeling. Involved in kidney development; required for maintaining the ureteric bud in an undifferentiated state. Involved in the development of the anterior segment of the eye. Required during erythropoiesis. Also acts as a negative regulator of innate immunity by inhibiting TLR2/TLR4 associated pattern-recognition and pro-inflammatory cytokine production. Plays an important role in regulating the circadian rhythms of plasma lipids, partially through regulating the rhythmic expression of MTTP. Required for proper development of GnRH neurons (gonadotropin-releasing hormone expressing neurons) that control the release of reproductive hormones from the pituitary gland. The chain is Leucine-rich repeat-containing G-protein coupled receptor 4 (Lgr4) from Rattus norvegicus (Rat).